The primary structure comprises 163 residues: Putative pre-16S rRNA nuclease (163 aa).

It belongs to the YqgF nuclease family.

The protein localises to the cytoplasm. Functionally, could be a nuclease involved in processing of the 5'-end of pre-16S rRNA. The sequence is that of Putative pre-16S rRNA nuclease from Rhizobium leguminosarum bv. trifolii (strain WSM2304).